The primary structure comprises 563 residues: NAD-dependent malic enzyme (563 aa).

Y101 functions as the Proton donor in the catalytic mechanism. NAD(+) is bound at residue R154. K172 serves as the catalytic Proton acceptor. A divalent metal cation is bound by residues E243, D244, and D267. NAD(+) contacts are provided by D267 and N416.

It belongs to the malic enzymes family. Homotetramer. It depends on Mg(2+) as a cofactor. Mn(2+) is required as a cofactor.

It carries out the reaction (S)-malate + NAD(+) = pyruvate + CO2 + NADH. It catalyses the reaction oxaloacetate + H(+) = pyruvate + CO2. This chain is NAD-dependent malic enzyme, found in Pseudomonas syringae pv. tomato (strain ATCC BAA-871 / DC3000).